The primary structure comprises 257 residues: UPF0246 protein lpg1366 (257 aa).

This sequence belongs to the UPF0246 family.

In Legionella pneumophila subsp. pneumophila (strain Philadelphia 1 / ATCC 33152 / DSM 7513), this protein is UPF0246 protein lpg1366.